The primary structure comprises 103 residues: Large ribosomal subunit protein bL21 (103 aa).

Belongs to the bacterial ribosomal protein bL21 family. Part of the 50S ribosomal subunit. Contacts protein L20.

In terms of biological role, this protein binds to 23S rRNA in the presence of protein L20. The sequence is that of Large ribosomal subunit protein bL21 from Polaromonas naphthalenivorans (strain CJ2).